The chain runs to 405 residues: Transcriptional regulatory protein DEP1 (405 aa).

Residues 1–12 show a composition bias toward low complexity; the sequence is MSQQTPQESEQT. Disordered regions lie at residues 1–26 and 49–171; these read MSQQTPQESEQTTAKEQDLDQESVLS and AGTE…VMPS. Residue S56 is modified to Phosphoserine. Basic and acidic residues-rich tracts occupy residues 86–108 and 116–139; these read SLKRPHEDEKEAIDEAKKMKVPG and EEEKSQELEEAIDSKEKSTDARDE. S120 carries the phosphoserine modification. Positions 140-157 are enriched in acidic residues; it reads QGDEGDNEEENNEEDNEN. Phosphoserine is present on S370.

Component of the RPD3C(L) complex composed of at least ASH1, CTI6, DEP1, PHO23, RPD3, RXT2, RXT3, SAP30, SDS3, SIN3, UME1 and UME6.

It localises to the cytoplasm. It is found in the nucleus. In terms of biological role, component of the RPD3C(L) histone deacetylase complex (HDAC) responsible for the deacetylation of lysine residues on the N-terminal part of the core histones (H2A, H2B, H3 and H4). Histone deacetylation gives a tag for epigenetic repression and plays an important role in transcriptional regulation, cell cycle progression and developmental events. The chain is Transcriptional regulatory protein DEP1 (DEP1) from Saccharomyces cerevisiae (strain ATCC 204508 / S288c) (Baker's yeast).